The primary structure comprises 497 residues: Serine/threonine-protein phosphatase 2A 56 kDa regulatory subunit beta isoform (497 aa).

Over residues 1-19 (METKLPPASTPTSPSSPGL) the composition is skewed to low complexity. 2 disordered regions span residues 1–55 (METK…YQSN) and 473–497 (QGTQ…GGQS). Residues Ser32, Ser35, Ser44, Ser46, Ser47, and Ser48 each carry the phosphoserine modification. A compositionally biased stretch (basic residues) spans 34 to 45 (RSLRRARPRRSH).

The protein belongs to the phosphatase 2A regulatory subunit B56 family. Component of the serine/threonine-protein phosphatase 2A complex (PP2A). This complex consists of a common heterodimeric core enzyme, composed of a 36 kDa catalytic subunit (subunit C) and a 65 kDa constant scaffold subunit (PR65 or subunit A), that associates with a variety of regulatory subunits. Proteins that associate with the core dimer include three families of regulatory subunits B (the R2/B/PR55/B55, R3/B''/PR72/PR130/PR59 and R5/B'/B56 families), the 48 kDa variable regulatory subunit, viral proteins, and cell signaling molecules. Interacts with SGO1. Interacts with AKT1. Ubiquitinated by CUL3-KLHL15 complex; this modification leads to proteasomal degradation.

Its subcellular location is the cytoplasm. Its function is as follows. As the regulatory component of the serine/threonine-protein phosphatase 2A (PP2A) holoenzyme, modulates substrate specificity, subcellular localization, and responsiveness to phosphorylation. The phosphorylated form mediates the interaction between PP2A and AKT1, leading to AKT1 dephosphorylation. The sequence is that of Serine/threonine-protein phosphatase 2A 56 kDa regulatory subunit beta isoform (Ppp2r5b) from Mus musculus (Mouse).